Reading from the N-terminus, the 112-residue chain is Photosystem II reaction center Psb28 protein (112 aa).

Belongs to the Psb28 family. As to quaternary structure, part of the photosystem II complex.

It is found in the cellular thylakoid membrane. The protein is Photosystem II reaction center Psb28 protein of Synechocystis sp. (strain ATCC 27184 / PCC 6803 / Kazusa).